The chain runs to 66 residues: DNA-directed RNA polymerase subunit omega (66 aa).

It belongs to the RNA polymerase subunit omega family. In terms of assembly, the RNAP catalytic core consists of 2 alpha, 1 beta, 1 beta' and 1 omega subunit. When a sigma factor is associated with the core the holoenzyme is formed, which can initiate transcription.

The catalysed reaction is RNA(n) + a ribonucleoside 5'-triphosphate = RNA(n+1) + diphosphate. In terms of biological role, promotes RNA polymerase assembly. Latches the N- and C-terminal regions of the beta' subunit thereby facilitating its interaction with the beta and alpha subunits. This Geobacillus kaustophilus (strain HTA426) protein is DNA-directed RNA polymerase subunit omega.